Reading from the N-terminus, the 931-residue chain is Protocadherin gamma-A4 (931 aa).

An N-terminal signal peptide occupies residues 1–28 (MAAPPARPDHTRLLHICLLLGVLVEIRA). Cadherin domains are found at residues 29-133 (EQIR…PPSF), 134-242 (GTEQ…APVF), 243-347 (TQPE…APEV), 348-452 (TVTS…PPTF), 453-567 (PHAS…YPTF), and 570-682 (DDST…KPSA). Topologically, residues 29-692 (EQIRYSVFEE…DPDDSGLTLY (664 aa)) are extracellular. 2 N-linked (GlcNAc...) asparagine glycosylation sites follow: Asn419 and Asn545. Residues 693–713 (LVVSVAAVSCVFLAFVTVLLA) form a helical membrane-spanning segment. Over 714 to 931 (LKLRRWHKSR…KKKSGKKEKK (218 aa)) the chain is Cytoplasmic. 2 disordered regions span residues 801 to 840 (KGDP…WPNN) and 901 to 931 (ATLT…KEKK). The segment covering 805–840 (NLQQAPPNTDWRFSQAQRPGTSGSQNGDDTGTWPNN) has biased composition (polar residues). The segment covering 921-931 (NKKKSGKKEKK) has biased composition (basic residues).

The protein resides in the cell membrane. Potential calcium-dependent cell-adhesion protein. May be involved in the establishment and maintenance of specific neuronal connections in the brain. This is Protocadherin gamma-A4 (PCDHGA4) from Pan troglodytes (Chimpanzee).